Here is a 284-residue protein sequence, read N- to C-terminus: D-tagatose-1,6-bisphosphate aldolase subunit GatY (284 aa).

The active-site Proton donor is the Asp-82. Zn(2+) contacts are provided by His-83 and His-180. Cys-181 contacts dihydroxyacetone phosphate. Zn(2+) is bound at residue His-208. Dihydroxyacetone phosphate is bound by residues 209 to 211 (GAS) and 230 to 233 (NVAT).

The protein belongs to the class II fructose-bisphosphate aldolase family. TagBP aldolase GatY subfamily. Forms a complex with GatZ. Zn(2+) serves as cofactor.

It catalyses the reaction D-tagatofuranose 1,6-bisphosphate = D-glyceraldehyde 3-phosphate + dihydroxyacetone phosphate. It functions in the pathway carbohydrate metabolism; D-tagatose 6-phosphate degradation; D-glyceraldehyde 3-phosphate and glycerone phosphate from D-tagatose 6-phosphate: step 2/2. Functionally, catalytic subunit of the tagatose-1,6-bisphosphate aldolase GatYZ, which catalyzes the reversible aldol condensation of dihydroxyacetone phosphate (DHAP or glycerone-phosphate) with glyceraldehyde 3-phosphate (G3P) to produce tagatose 1,6-bisphosphate (TBP). Requires GatZ subunit for full activity and stability. Is involved in the catabolism of galactitol. This is D-tagatose-1,6-bisphosphate aldolase subunit GatY from Salmonella paratyphi A (strain ATCC 9150 / SARB42).